A 98-amino-acid chain; its full sequence is NADH-ubiquinone oxidoreductase chain 4L (98 aa).

2 consecutive transmembrane segments (helical) span residues 26-46 and 61-81; these read LVAS…MATL and IILL…LISI.

Belongs to the complex I subunit 4L family. Core subunit of respiratory chain NADH dehydrogenase (Complex I) which is composed of 45 different subunits.

It is found in the mitochondrion inner membrane. It carries out the reaction a ubiquinone + NADH + 5 H(+)(in) = a ubiquinol + NAD(+) + 4 H(+)(out). Its function is as follows. Core subunit of the mitochondrial membrane respiratory chain NADH dehydrogenase (Complex I) which catalyzes electron transfer from NADH through the respiratory chain, using ubiquinone as an electron acceptor. Part of the enzyme membrane arm which is embedded in the lipid bilayer and involved in proton translocation. The sequence is that of NADH-ubiquinone oxidoreductase chain 4L (MT-ND4L) from Macaca nigrescens (Gorontalo macaque).